Reading from the N-terminus, the 85-residue chain is Small ribosomal subunit protein uS17 (85 aa).

The protein belongs to the universal ribosomal protein uS17 family. In terms of assembly, part of the 30S ribosomal subunit.

Its function is as follows. One of the primary rRNA binding proteins, it binds specifically to the 5'-end of 16S ribosomal RNA. The sequence is that of Small ribosomal subunit protein uS17 from Haemophilus influenzae (strain 86-028NP).